The sequence spans 607 residues: Protease Do-like 2, chloroplastic (607 aa).

Positions 41 to 104 (SSNIKRKSSR…LSDFSRDQQT (64 aa)) are disordered. Positions 87-104 (PKKEKKESLSDFSRDQQT) are enriched in basic and acidic residues. A serine protease region spans residues 118-317 (VVKVYCTHTA…LTDYERNGKY (200 aa)). Active-site charge relay system residues include His-159, Asp-190, and Ser-268. The PDZ domain occupies 308–403 (LTDYERNGKY…YLISQKFAGD (96 aa)).

It belongs to the peptidase S1C family.

It is found in the plastid. Its subcellular location is the chloroplast thylakoid membrane. Its function is as follows. Serine protease that performs the primary cleavage of the photodamaged D1 protein in plant photosystem II. In Arabidopsis thaliana (Mouse-ear cress), this protein is Protease Do-like 2, chloroplastic (DEGP2).